Here is a 374-residue protein sequence, read N- to C-terminus: Ribosomal RNA large subunit methyltransferase G (374 aa).

Belongs to the methyltransferase superfamily. RlmG family.

It is found in the cytoplasm. The enzyme catalyses guanosine(1835) in 23S rRNA + S-adenosyl-L-methionine = N(2)-methylguanosine(1835) in 23S rRNA + S-adenosyl-L-homocysteine + H(+). Specifically methylates the guanine in position 1835 (m2G1835) of 23S rRNA. In Pseudomonas putida (strain W619), this protein is Ribosomal RNA large subunit methyltransferase G.